The following is a 700-amino-acid chain: Long-chain-fatty-acid--CoA ligase 1 (700 aa).

The segment at 1-21 (MVAQYTVPVGKAANEHETAPR) is disordered. Lys-189 participates in a covalent cross-link: Glycyl lysine isopeptide (Lys-Gly) (interchain with G-Cter in ubiquitin). Position 269–280 (269–280 (YTSGSTGEPKGV)) interacts with ATP. Positions 531–580 (DGWFKTGDIGEWEANGHLKIIDRKKNLVKTMNGEYIALEKLESVYRSNEY) match the FACS motif.

It belongs to the ATP-dependent AMP-binding enzyme family. In terms of assembly, interacts with FAT1. Mg(2+) is required as a cofactor.

Its subcellular location is the lipid droplet. It localises to the cell membrane. It catalyses the reaction a long-chain fatty acid + ATP + CoA = a long-chain fatty acyl-CoA + AMP + diphosphate. The catalysed reaction is (9Z)-octadecenoate + ATP + CoA = (9Z)-octadecenoyl-CoA + AMP + diphosphate. It carries out the reaction hexadecanoate + ATP + CoA = hexadecanoyl-CoA + AMP + diphosphate. The enzyme catalyses (9Z)-hexadecenoate + ATP + CoA = (9Z)-hexadecenoyl-CoA + AMP + diphosphate. It catalyses the reaction tetradecanoate + ATP + CoA = tetradecanoyl-CoA + AMP + diphosphate. The catalysed reaction is (9Z)-tetradecenoate + ATP + CoA = (9Z)-tetradecenoyl-CoA + AMP + diphosphate. It carries out the reaction (9Z,12Z)-octadecadienoate + ATP + CoA = (9Z,12Z)-octadecadienoyl-CoA + AMP + diphosphate. The enzyme catalyses dodecanoate + ATP + CoA = dodecanoyl-CoA + AMP + diphosphate. It catalyses the reaction pentadecanoate + ATP + CoA = pentadecanoyl-CoA + AMP + diphosphate. The catalysed reaction is undecanoate + ATP + CoA = undecanoyl-CoA + AMP + diphosphate. It carries out the reaction heptadecanoate + ATP + CoA = heptadecanoyl-CoA + AMP + diphosphate. The enzyme catalyses octadecanoate + ATP + CoA = octadecanoyl-CoA + AMP + diphosphate. Functionally, activates long-chain fatty acids (LCFA) by esterification of the fatty acids into metabolically active CoA-thioesters for subsequent degradation or incorporation into phospholipids. Also facilitates the transport of LCFAs into the cell, either by active transport or by decreasing the intracellular LCFA concentration. It may supplement intracellular myristoyl-CoA pools from exogenous myristate. Preferentially acts on C12:0-C16:0 fatty acids with myristic and pentadecanic acid (C15:0) having the highest activities. Also involved in long-chain base (LCB) uptake of sphingolipids. In contrast ot LCFA uptake, LCB uptake does not require ATP, suggesting that the enzyme is directly involved in active LCB uptake. Involved in the sphingolipid-to-glycerolipid metabolic pathway, converting the sphingolipid metabolite hexadecenoic acid to hexadecenoyl-CoA, which is then further converted to glycerolipids. The protein is Long-chain-fatty-acid--CoA ligase 1 (FAA1) of Saccharomyces cerevisiae (strain ATCC 204508 / S288c) (Baker's yeast).